We begin with the raw amino-acid sequence, 244 residues long: 1-(5-phosphoribosyl)-5-[(5-phosphoribosylamino)methylideneamino] imidazole-4-carboxamide isomerase (244 aa).

Asp10 functions as the Proton acceptor in the catalytic mechanism. The active-site Proton donor is the Asp132.

The protein belongs to the HisA/HisF family.

The protein localises to the cytoplasm. It carries out the reaction 1-(5-phospho-beta-D-ribosyl)-5-[(5-phospho-beta-D-ribosylamino)methylideneamino]imidazole-4-carboxamide = 5-[(5-phospho-1-deoxy-D-ribulos-1-ylimino)methylamino]-1-(5-phospho-beta-D-ribosyl)imidazole-4-carboxamide. The protein operates within amino-acid biosynthesis; L-histidine biosynthesis; L-histidine from 5-phospho-alpha-D-ribose 1-diphosphate: step 4/9. This chain is 1-(5-phosphoribosyl)-5-[(5-phosphoribosylamino)methylideneamino] imidazole-4-carboxamide isomerase, found in Xanthomonas axonopodis pv. citri (strain 306).